A 46-amino-acid chain; its full sequence is Large ribosomal subunit protein bL36B (46 aa).

This sequence belongs to the bacterial ribosomal protein bL36 family.

This chain is Large ribosomal subunit protein bL36B, found in Enterobacter sp. (strain 638).